The primary structure comprises 180 residues: Outer-membrane lipoprotein LolB (180 aa).

Residues 1–16 form the signal peptide; it reads MIRRVLLLSLALLLAG. Residue Cys17 is the site of N-palmitoyl cysteine attachment. Cys17 is lipidated: S-diacylglycerol cysteine.

This sequence belongs to the LolB family. As to quaternary structure, monomer.

It is found in the cell outer membrane. In terms of biological role, plays a critical role in the incorporation of lipoproteins in the outer membrane after they are released by the LolA protein. The protein is Outer-membrane lipoprotein LolB of Chromobacterium violaceum (strain ATCC 12472 / DSM 30191 / JCM 1249 / CCUG 213 / NBRC 12614 / NCIMB 9131 / NCTC 9757 / MK).